The primary structure comprises 509 residues: Maturase K (509 aa).

This sequence belongs to the intron maturase 2 family. MatK subfamily.

Its subcellular location is the plastid. It localises to the chloroplast. Functionally, usually encoded in the trnK tRNA gene intron. Probably assists in splicing its own and other chloroplast group II introns. The sequence is that of Maturase K from Chamaecyparis obtusa (Hinoki false-cypress).